The chain runs to 320 residues: MDSVEGLALGPVIWTASQEELLRQPYNHLVTQPGKNFRNTLIRVFNGFYGLSERQVAAVTELVEMLHVASLLIDDIEDNSAWRRGVAAAHVVYGSPMTINTANYMYFVSMSLLGQLAAQRPAGPLQDLLKVFNEEMMNLHRGQGLDIYWRDTFTVPSEHDYLRMVMHKTGGLFRLTVRIMEALREGPDGPGSTLVPLSNLLGVLYQVRDDYLNLTDSRMSENKGFADDITEGKFSYPIIHGLQYARVHDPAGYDFLVSVLRQRTTDITTKRRVVRYLADVSGSLAYTKQRIIELATLIKTKYIPASGTELCNVIDSLTSF.

Residues Lys35, Arg38, and His67 each coordinate isopentenyl diphosphate. The Mg(2+) site is built by Asp74 and Asp78. Arg83 is a dimethylallyl diphosphate binding site. Position 84 (Arg84) interacts with isopentenyl diphosphate. Dimethylallyl diphosphate contacts are provided by Lys168, Thr169, Gln206, Lys223, and Lys233.

The protein belongs to the FPP/GGPP synthase family. The cofactor is Mg(2+).

Its subcellular location is the cytoplasm. The enzyme catalyses isopentenyl diphosphate + dimethylallyl diphosphate = (2E)-geranyl diphosphate + diphosphate. The catalysed reaction is isopentenyl diphosphate + (2E)-geranyl diphosphate = (2E,6E)-farnesyl diphosphate + diphosphate. It catalyses the reaction isopentenyl diphosphate + (2E,6E)-farnesyl diphosphate = (2E,6E,10E)-geranylgeranyl diphosphate + diphosphate. It participates in isoprenoid biosynthesis; farnesyl diphosphate biosynthesis; farnesyl diphosphate from geranyl diphosphate and isopentenyl diphosphate: step 1/1. It functions in the pathway isoprenoid biosynthesis; geranyl diphosphate biosynthesis; geranyl diphosphate from dimethylallyl diphosphate and isopentenyl diphosphate: step 1/1. The protein operates within isoprenoid biosynthesis; geranylgeranyl diphosphate biosynthesis; geranylgeranyl diphosphate from farnesyl diphosphate and isopentenyl diphosphate: step 1/1. Functionally, catalyzes the trans-addition of the 3 molecules of IPP onto DMAPP to form geranylgeranyl pyrophosphate. May be involved in vesicle trafficking and protein sorting. In Eremothecium gossypii (strain ATCC 10895 / CBS 109.51 / FGSC 9923 / NRRL Y-1056) (Yeast), this protein is Geranylgeranyl pyrophosphate synthase (BTS1).